The primary structure comprises 367 residues: GTP cyclohydrolase FolE2 (367 aa).

It belongs to the GTP cyclohydrolase IV family.

The catalysed reaction is GTP + H2O = 7,8-dihydroneopterin 3'-triphosphate + formate + H(+). It functions in the pathway cofactor biosynthesis; 7,8-dihydroneopterin triphosphate biosynthesis; 7,8-dihydroneopterin triphosphate from GTP: step 1/1. Functionally, converts GTP to 7,8-dihydroneopterin triphosphate. The chain is GTP cyclohydrolase FolE2 from Dinoroseobacter shibae (strain DSM 16493 / NCIMB 14021 / DFL 12).